Here is a 453-residue protein sequence, read N- to C-terminus: Lysine histidine transporter-like 1 (453 aa).

At 1 to 44 the chain is on the cytoplasmic side; sequence MYIQMTDGVPPPPEQSSLDHRIDELERQKEIDDWLPITSSRNAK. A run of 2 helical transmembrane segments spans residues 45-65 and 66-86; these read WWYS…LGLP and FFMA…SWII. Topologically, residues 87-122 are cytoplasmic; the sequence is TLYTLWQMVEMHEMVPGKRFDRYHELGQFAFGERLG. Residues 123–143 form a helical membrane-spanning segment; the sequence is LYIIVPQQIIVEVGVCIVYMV. Topologically, residues 144-164 are extracellular; that stretch reads TGGQSLKKFHEIACQDCSPIR. A helical membrane pass occupies residues 165-185; the sequence is LSFFIMIFASSHFVLSHLPNF. The Cytoplasmic portion of the chain corresponds to 186–187; sequence NS. Residues 188-208 traverse the membrane as a helical segment; the sequence is ISGVSLVAAVMSLSYSTIAWT. Over 209–231 the chain is Extracellular; it reads ATAAKGVQEDVQYGYKSGTTAST. Residues 232-252 traverse the membrane as a helical segment; the sequence is VLSFFTGLGGIAFAYAGHNVV. Topologically, residues 253–276 are cytoplasmic; that stretch reads LEIQATIPSTPSNPSKGPMWRGVV. Residues 277-297 form a helical membrane-spanning segment; that stretch reads VAYVVVALCYFPVALVGYGVF. Residues 298 to 318 lie on the Extracellular side of the membrane; sequence GNAVLDNVLMSLETPVWAIAT. Residues 319–339 form a helical membrane-spanning segment; sequence ANLFVVMHVIGSYQIFAMPVF. Residues 340 to 359 are Cytoplasmic-facing; that stretch reads DMVETFLVKKLNFKPSTVLR. Residues 360–382 traverse the membrane as a helical segment; sequence FIVRNVYVALTMFIGIMIPFFGG. The Extracellular segment spans residues 383 to 385; it reads LLA. A helical membrane pass occupies residues 386–408; the sequence is FFGGFAFAPTSYFLPCIMWLLIY. The Cytoplasmic segment spans residues 409–412; it reads KPKR. The chain crosses the membrane as a helical span at residues 413-433; it reads FSLSWWTNWVCIVLGVVLMIL. At 434–453 the chain is on the extracellular side; it reads SSIGGLRQIIIQSKDYSFFS.

The protein belongs to the amino acid/polyamine transporter 2 family. Amino acid/auxin permease (AAAP) (TC 2.A.18.2) subfamily.

The protein localises to the cell membrane. Amino acid transporter. The sequence is that of Lysine histidine transporter-like 1 from Arabidopsis thaliana (Mouse-ear cress).